We begin with the raw amino-acid sequence, 182 residues long: MASKNSASLALFFALNILFFTLTAGTNCRCNPSPKPRPLPNPKVPSPKVPTPSVPSPYVPTPSVPSPSVPTPSVPSPSVPSPNPTPVIPPRTPGSSGNCPIDALRLGVCANVLSGLLNVQLGQPSPQPCCSLIQGLVDLDAAVCLCTALRANVLGINLNVPISLSVLLNVCNRRLPSNFQCA.

An N-terminal signal peptide occupies residues methionine 1–glycine 25. Residues serine 33 to threonine 92 are compositionally biased toward pro residues. Positions serine 33–glycine 94 are disordered. Repeat copies occupy residues proline 42–serine 46, proline 47–threonine 51, proline 52–serine 56, proline 62–serine 66, proline 67–threonine 71, proline 72–serine 76, and proline 77–serine 81. The tract at residues proline 42–serine 81 is 7 X 5 AA repeats of P-[KS]-V-P-[ST].

The protein belongs to the plant LTP family. PEARLI1 subfamily.

The protein localises to the secreted. Its subcellular location is the cell wall. Its function is as follows. Probable lipid transfer protein (LTP). May improve freezing survival. Seems to control the flowering process and lignin synthesis. Confers resistance to Botrytis cinerea. In Arabidopsis thaliana (Mouse-ear cress), this protein is pEARLI1-like lipid transfer protein 2.